A 152-amino-acid chain; its full sequence is Deoxyuridine 5'-triphosphate nucleotidohydrolase (152 aa).

Substrate is bound by residues 72–74 (RSG), Asn85, and 89–91 (TID).

It belongs to the dUTPase family. It depends on Mg(2+) as a cofactor.

It carries out the reaction dUTP + H2O = dUMP + diphosphate + H(+). It functions in the pathway pyrimidine metabolism; dUMP biosynthesis; dUMP from dCTP (dUTP route): step 2/2. In terms of biological role, this enzyme is involved in nucleotide metabolism: it produces dUMP, the immediate precursor of thymidine nucleotides and it decreases the intracellular concentration of dUTP so that uracil cannot be incorporated into DNA. The sequence is that of Deoxyuridine 5'-triphosphate nucleotidohydrolase from Rhodopseudomonas palustris (strain ATCC BAA-98 / CGA009).